The chain runs to 77 residues: Acyl carrier protein (77 aa).

The Carrier domain maps to 4 to 77 (SETFEKVKKI…TVQAAVDXIN (74 aa)). Ser-40 carries the post-translational modification O-(pantetheine 4'-phosphoryl)serine.

The protein belongs to the acyl carrier protein (ACP) family. In terms of processing, 4'-phosphopantetheine is transferred from CoA to a specific serine of apo-ACP by AcpS. This modification is essential for activity because fatty acids are bound in thioester linkage to the sulfhydryl of the prosthetic group.

The protein localises to the cytoplasm. The protein operates within lipid metabolism; fatty acid biosynthesis. Carrier of the growing fatty acid chain in fatty acid biosynthesis. The sequence is that of Acyl carrier protein from Anabaena variabilis.